A 482-amino-acid chain; its full sequence is ATP synthase subunit beta (482 aa).

ATP is bound at residue 162–169 (GGAGVGKT).

It belongs to the ATPase alpha/beta chains family. In terms of assembly, F-type ATPases have 2 components, CF(1) - the catalytic core - and CF(0) - the membrane proton channel. CF(1) has five subunits: alpha(3), beta(3), gamma(1), delta(1), epsilon(1). CF(0) has four main subunits: a(1), b(1), b'(1) and c(9-12).

Its subcellular location is the cellular thylakoid membrane. It catalyses the reaction ATP + H2O + 4 H(+)(in) = ADP + phosphate + 5 H(+)(out). Its function is as follows. Produces ATP from ADP in the presence of a proton gradient across the membrane. The catalytic sites are hosted primarily by the beta subunits. The chain is ATP synthase subunit beta from Nostoc sp. (strain PCC 7120 / SAG 25.82 / UTEX 2576).